The following is a 165-amino-acid chain: MYCPFCRNPDSRVVDSRMADDGSAIRRRRQCPECGRRFTTVETTSLTVIKRSGVGEPFSRSKVINGVRKACQGRPVTEDDLAMLAQEVEETIRASGAAEIEAHEVGLAILSPLQKLDEVAYLRFASVYQAFESLEDFETAISILRHEAEVEAKAAKGKSSEKSPL.

Residues 3-34 (CPFCRNPDSRVVDSRMADDGSAIRRRRQCPEC) fold into a zinc finger. The ATP-cone domain occupies 46–136 (LTVIKRSGVG…VYQAFESLED (91 aa)).

It belongs to the NrdR family. It depends on Zn(2+) as a cofactor.

Its function is as follows. Negatively regulates transcription of bacterial ribonucleotide reductase nrd genes and operons by binding to NrdR-boxes. In Arthrobacter sp. (strain FB24), this protein is Transcriptional repressor NrdR.